A 589-amino-acid chain; its full sequence is MPFKAFDTFKEKILKPGKEGVKNAVGDSLGILQRKIDGTTEEEDNIELNEEGRPVQTSRPSPPLCDCHCCGLPKRYIIAIMSGLGFCISFGIRCNLGVAIVEMVNNSTVYVDGKPEIQTAQFNWDPETVGLIHGSFFWGYIMTQIPGGFISNKFAANRVFGAAIFLTSTLNMFIPSAARVHYGCVMCVRILQGLVEGVTYPACHGMWSKWAPPLERSRLATTSFCGSYAGAVVAMPLAGVLVQYIGWSSVFYIYGMFGIIWYMFWLLQAYECPAAHPTISNEEKTYIETSIGEGANVVSLSKFSTPWKRFFTSLPVYAIIVANFCRSWTFYLLLISQPAYFEEVFGFAISKVGLLSAVPHMVMTIVVPIGGQLADYLRSRQILTTTAVRKIMNCGGFGMEATLLLVVGFSHTKGVAISFLVLAVGFSGFAISGFNVNHLDIAPRYASILMGISNGVGTLSGMVCPLIVGAMTRHKTREEWQNVFLIAALVHYSGVIFYGVFASGEKQEWADPENLSEEKCGIIDQDELAEEIELNHESFASPKKKMSYGATSQNCEVQKKEWKGQRGATLDEEELTSYQNEERNFSTIS.

Over 1-76 (MPFKAFDTFK…CHCCGLPKRY (76 aa)) the chain is Cytoplasmic. A compositionally biased stretch (acidic residues) spans 40-49 (TEEEDNIELN). The tract at residues 40–61 (TEEEDNIELNEEGRPVQTSRPS) is disordered. The chain crosses the membrane as a helical span at residues 77-97 (IIAIMSGLGFCISFGIRCNLG). The Vesicular segment spans residues 98–130 (VAIVEMVNNSTVYVDGKPEIQTAQFNWDPETVG). Residue asparagine 106 is glycosylated (N-linked (GlcNAc...) asparagine). The chain crosses the membrane as a helical span at residues 131–151 (LIHGSFFWGYIMTQIPGGFIS). Over 152-153 (NK) the chain is Cytoplasmic. A helical membrane pass occupies residues 154–174 (FAANRVFGAAIFLTSTLNMFI). Over 175-182 (PSAARVHY) the chain is Vesicular. A helical membrane pass occupies residues 183–203 (GCVMCVRILQGLVEGVTYPAC). Topologically, residues 204–221 (HGMWSKWAPPLERSRLAT) are cytoplasmic. A helical membrane pass occupies residues 222-242 (TSFCGSYAGAVVAMPLAGVLV). The Vesicular portion of the chain corresponds to 243 to 249 (QYIGWSS). A helical transmembrane segment spans residues 250–270 (VFYIYGMFGIIWYMFWLLQAY). Topologically, residues 271-314 (ECPAAHPTISNEEKTYIETSIGEGANVVSLSKFSTPWKRFFTSL) are cytoplasmic. Residues 315–335 (PVYAIIVANFCRSWTFYLLLI) form a helical membrane-spanning segment. Residues 336–353 (SQPAYFEEVFGFAISKVG) lie on the Vesicular side of the membrane. The helical transmembrane segment at 354–374 (LLSAVPHMVMTIVVPIGGQLA) threads the bilayer. Over 375-390 (DYLRSRQILTTTAVRK) the chain is Cytoplasmic. Residues 391 to 411 (IMNCGGFGMEATLLLVVGFSH) form a helical membrane-spanning segment. At 412 to 413 (TK) the chain is on the vesicular side. The helical transmembrane segment at 414 to 434 (GVAISFLVLAVGFSGFAISGF) threads the bilayer. At 435–447 (NVNHLDIAPRYAS) the chain is on the cytoplasmic side. A helical transmembrane segment spans residues 448–468 (ILMGISNGVGTLSGMVCPLIV). Topologically, residues 469-481 (GAMTRHKTREEWQ) are vesicular. The helical transmembrane segment at 482 to 502 (NVFLIAALVHYSGVIFYGVFA) threads the bilayer. The Cytoplasmic portion of the chain corresponds to 503–586 (SGEKQEWADP…SYQNEERNFS (84 aa)). The segment at 559–589 (KKEWKGQRGATLDEEELTSYQNEERNFSTIS) is disordered. Over residues 580–589 (NEERNFSTIS) the composition is skewed to basic and acidic residues.

The protein belongs to the major facilitator superfamily. Sodium/anion cotransporter family. VGLUT subfamily. Expressed in amygdala, cerebellum, hippocampus, medulla, spinal cord and thalamus.

The protein resides in the cytoplasmic vesicle. The protein localises to the secretory vesicle. It localises to the synaptic vesicle membrane. It is found in the cell membrane. Its subcellular location is the synapse. The protein resides in the synaptosome. The enzyme catalyses L-glutamate(out) = L-glutamate(in). It carries out the reaction 3 Na(+)(out) + phosphate(out) = 3 Na(+)(in) + phosphate(in). The catalysed reaction is chloride(in) = chloride(out). Its activity is regulated as follows. The L-glutamate uniporter activity exhibits a biphasic dependence on chloride concentration. Chloride channel activity is allosterically activated by lumenal H(+) and Cl(-) leading to synaptic vesicles acidification. The glutamate transport activity is allosterically activated by lumenal H(+) and Cl(-), preventing non-vesicular L-glutamate release. Multifunctional transporter that transports L-glutamate as well as multiple ions such as chloride, sodium and phosphate. At the synaptic vesicle membrane, mainly functions as an uniporter that mediates the uptake of L-glutamate into synaptic vesicles at presynaptic nerve terminals of excitatory neural cells. The L-glutamate uniporter activity is electrogenic and is driven by the proton electrochemical gradient, mainly by the electrical gradient established by the vacuolar H(+)-ATPase across the synaptic vesicle membrane. In addition, functions as a chloride channel that allows a chloride permeation through the synaptic vesicle membrane that affects the proton electrochemical gradient and promotes synaptic vesicles acidification. At the plasma membrane, following exocytosis, functions as a symporter of Na(+) and phosphate from the extracellular space to the cytoplasm allowing synaptic phosphate homeostasis regulation. The symporter activity is electrogenic. Moreover, operates synergistically with SLC18A3/VACHT under a constant H(+) gradient, thereby allowing striatal vesicular acetylcholine uptake. This is Vesicular glutamate transporter 3 from Homo sapiens (Human).